A 113-amino-acid chain; its full sequence is Protein FAM27E3 (113 aa).

Residues 1-113 (MGIFQLLRDR…YTHRHTHRVL (113 aa)) form a disordered region. The segment covering 77–99 (QTDRERERNTQRLRDRERRENGR) has biased composition (basic and acidic residues). Residues 100–113 (HTHTYTHRHTHRVL) are compositionally biased toward basic residues.

Belongs to the FAM27 family.

The sequence is that of Protein FAM27E3 (FAM27E3) from Homo sapiens (Human).